A 499-amino-acid chain; its full sequence is Glycerol kinase (499 aa).

Thr-15 is an ADP binding site. ATP is bound by residues Thr-15, Thr-16, and Ser-17. Thr-15 contributes to the sn-glycerol 3-phosphate binding site. Arg-19 is an ADP binding site. Sn-glycerol 3-phosphate is bound by residues Arg-85, Glu-86, Tyr-137, and Asp-246. Arg-85, Glu-86, Tyr-137, Asp-246, and Gln-247 together coordinate glycerol. 2 residues coordinate ADP: Thr-268 and Gly-311. Thr-268, Gly-311, Gln-315, and Gly-412 together coordinate ATP. Positions 412 and 416 each coordinate ADP.

This sequence belongs to the FGGY kinase family.

The enzyme catalyses glycerol + ATP = sn-glycerol 3-phosphate + ADP + H(+). Its pathway is polyol metabolism; glycerol degradation via glycerol kinase pathway; sn-glycerol 3-phosphate from glycerol: step 1/1. Inhibited by fructose 1,6-bisphosphate (FBP). Key enzyme in the regulation of glycerol uptake and metabolism. Catalyzes the phosphorylation of glycerol to yield sn-glycerol 3-phosphate. This chain is Glycerol kinase, found in Parabacteroides distasonis (strain ATCC 8503 / DSM 20701 / CIP 104284 / JCM 5825 / NCTC 11152).